Reading from the N-terminus, the 386-residue chain is Rhomboid domain-containing protein 3 (386 aa).

The next 5 membrane-spanning stretches (helical) occupy residues 20–40, 58–78, 92–112, 141–161, and 163–183; these read VLML…LVLA, LGHT…TVGW, ASAL…GLGL, GALP…LLSS, and PPFL…AGAF. A UBA domain is found at 324–362; that stretch reads VSSLRLQQLERMGFPTEQAVVALAATGRVEGAVSLLVGG.

Its subcellular location is the membrane. This Homo sapiens (Human) protein is Rhomboid domain-containing protein 3 (RHBDD3).